Here is a 752-residue protein sequence, read N- to C-terminus: MEHIYQYSWIIPFVTLPVPMLIGAGLLLFPAATKKLRRMWAFPSVFLLSIVMIFSIDLSIQQINSSFIYQYIWSWTINNDFSLEFGHLIDPLTSILSVLITTVGILVLFYSDNYMSHDQGYLRFFAYMSFFTTSMLGLVTSSNLIQIYIFWELVGVCSYLLIGFWFTRPIASNACQKAFVTNRVGDFGLLLGILGLYWITGSFEFRDLFKIFNNLIYNNQVNFLFVTLCAVLLFSGAIAKSAQFPLHVWLPDAMEGPTPISALIHAATMVAAGIFLVARLFPLFVIIPFIMNLIALIGIITVFLGATLALAQKDIKRSLAYSTMSQLGYMMLALGMGSYRAALFHLITHAYSKALLFLGSGSIIHSMEAILGYSPDKSQNMVLMGGLTKHIPITKTAFLLGTLSLCGIPPFACFWSKDEILNDSWLYSPIFAIIACFTAGLTAFYMFRVYLLTFDGHFNAHFQSYSGKKNSSFYSISLWGKEGSKMLNKNLRLLALLTMNNKERASFFWKNTYQIDGNVRNMTWPFITIQNFNTKRIFSYPHESDNTMLFPMLILVLFTLFIGAIGIPFNQFNQEGMLLDIDILSKLLTPSLNLLHQNPENSVDWYEFVTNATFSASIAFFGIFIASFLYKPVYSSLQNLNFFNSFAKKGPKRILWDKIINVIYNWSSNRGYIDAFYAISFIGGIRKLAELIHFFDKQIIDGTPNGVGVTSFFVGEGIKNVGSGRISFYLLFYLFYALIFLLIYYSVYKFII.

16 helical membrane-spanning segments follow: residues 9–29, 40–60, 89–109, 125–145, 147–167, 185–205, 219–239, 258–278, 280–300, 327–347, 354–374, 396–416, 425–445, 549–569, 608–628, and 728–748; these read WIIP…LLLF, WAFP…DLSI, IDPL…LVLF, FAYM…SNLI, IYIF…FWFT, GDFG…SFEF, NQVN…GAIA, TPIS…FLVA, LFPL…IGII, LGYM…FHLI, ALLF…LGYS, TAFL…CFWS, WLYS…TAFY, LFPM…GIPF, FVTN…IASF, and FYLL…YSVY.

This sequence belongs to the complex I subunit 5 family. As to quaternary structure, NDH is composed of at least 16 different subunits, 5 of which are encoded in the nucleus.

The protein resides in the plastid. It localises to the chloroplast thylakoid membrane. The enzyme catalyses a plastoquinone + NADH + (n+1) H(+)(in) = a plastoquinol + NAD(+) + n H(+)(out). The catalysed reaction is a plastoquinone + NADPH + (n+1) H(+)(in) = a plastoquinol + NADP(+) + n H(+)(out). Its function is as follows. NDH shuttles electrons from NAD(P)H:plastoquinone, via FMN and iron-sulfur (Fe-S) centers, to quinones in the photosynthetic chain and possibly in a chloroplast respiratory chain. The immediate electron acceptor for the enzyme in this species is believed to be plastoquinone. Couples the redox reaction to proton translocation, and thus conserves the redox energy in a proton gradient. The polypeptide is NAD(P)H-quinone oxidoreductase subunit 5, chloroplastic (ndhF) (Manihot esculenta (Cassava)).